The chain runs to 268 residues: Thiazole synthase (268 aa).

K111 functions as the Schiff-base intermediate with DXP in the catalytic mechanism. 1-deoxy-D-xylulose 5-phosphate is bound by residues G172, 198-199, and 220-221; these read AG and NT.

It belongs to the ThiG family. Homotetramer. Forms heterodimers with either ThiH or ThiS.

It is found in the cytoplasm. It catalyses the reaction [ThiS sulfur-carrier protein]-C-terminal-Gly-aminoethanethioate + 2-iminoacetate + 1-deoxy-D-xylulose 5-phosphate = [ThiS sulfur-carrier protein]-C-terminal Gly-Gly + 2-[(2R,5Z)-2-carboxy-4-methylthiazol-5(2H)-ylidene]ethyl phosphate + 2 H2O + H(+). Its pathway is cofactor biosynthesis; thiamine diphosphate biosynthesis. Catalyzes the rearrangement of 1-deoxy-D-xylulose 5-phosphate (DXP) to produce the thiazole phosphate moiety of thiamine. Sulfur is provided by the thiocarboxylate moiety of the carrier protein ThiS. In vitro, sulfur can be provided by H(2)S. This Caulobacter sp. (strain K31) protein is Thiazole synthase.